The following is a 1133-amino-acid chain: Error-prone DNA polymerase (1133 aa).

Belongs to the DNA polymerase type-C family. DnaE2 subfamily.

Its subcellular location is the cytoplasm. It carries out the reaction DNA(n) + a 2'-deoxyribonucleoside 5'-triphosphate = DNA(n+1) + diphosphate. Its function is as follows. DNA polymerase involved in damage-induced mutagenesis and translesion synthesis (TLS). It is not the major replicative DNA polymerase. This is Error-prone DNA polymerase from Anaeromyxobacter sp. (strain K).